The chain runs to 117 residues: Ribosome-binding factor A (117 aa).

This sequence belongs to the RbfA family. In terms of assembly, monomer. Binds 30S ribosomal subunits, but not 50S ribosomal subunits or 70S ribosomes.

It is found in the cytoplasm. Its function is as follows. One of several proteins that assist in the late maturation steps of the functional core of the 30S ribosomal subunit. Associates with free 30S ribosomal subunits (but not with 30S subunits that are part of 70S ribosomes or polysomes). Required for efficient processing of 16S rRNA. May interact with the 5'-terminal helix region of 16S rRNA. In Nitrosomonas eutropha (strain DSM 101675 / C91 / Nm57), this protein is Ribosome-binding factor A.